The primary structure comprises 367 residues: PR domain zinc finger protein 12 (367 aa).

The region spanning 86 to 203 is the SET domain; the sequence is AEVIIAQSSI…PDQELLVWYG (118 aa). 3 C2H2-type zinc fingers span residues 243–265, 271–293, and 299–323; these read MRCV…MRIH, FVCR…VRLH, and YKCQ…SARH. The interval 318-337 is disordered; it reads QKSARHRPPSTALQAHSPAL.

It belongs to the class V-like SAM-binding methyltransferase superfamily. Interacts with EHMT2. Not found in adult tissues except in dorsal root ganglia.

The protein resides in the nucleus. Transcriptional regulator necessary for the development of nociceptive neurons, playing a key role in determining the nociceptive lineage from neural crest cell progenitors. Initiates neurogenesis and activates downstream pro-neuronal transcription factors, such as NEUROD1, BRN3A, and ISL1, specifically within nociceptive neurons, while repressing non-nociceptor cell fates. Essential for the proper function of nociceptors in adults, influencing both their excitability and their gene expression, thereby impacting how these neurons respond to various pain stimuli. The chain is PR domain zinc finger protein 12 (PRDM12) from Homo sapiens (Human).